Here is a 397-residue protein sequence, read N- to C-terminus: uncharacterized protein (397 aa).

[4Fe-4S] cluster contacts are provided by cysteine 8, cysteine 14, cysteine 17, and cysteine 95. Residues glutamine 229, tyrosine 258, glutamate 279, and aspartate 325 each coordinate S-adenosyl-L-methionine. Cysteine 352 acts as the Nucleophile in catalysis.

Belongs to the class I-like SAM-binding methyltransferase superfamily. RNA M5U methyltransferase family.

This is an uncharacterized protein from Chlamydia muridarum (strain MoPn / Nigg).